The primary structure comprises 631 residues: Transcription factor dibT (631 aa).

The zn(2)-C6 fungal-type DNA-binding region spans 11–38 (CWTCRLRRKRCDSVQPVCGSCQSLEITC). Low complexity predominate over residues 123–144 (SLADSSASTPSTSSGRPTTLRS). 2 disordered regions span residues 123–148 (SLAD…SVDR) and 469–488 (GLKD…TSAG).

It is found in the nucleus. Functionally, transcription factor; part of the gene cluster that mediates the biosynthesis of pestalotiollide B which is part of dibenzodioxocinones, a novel class of inhibitors against cholesterol ester transfer protein (CEPT). Acts as the key transcription factor within the cluster and positively regulates the expression of the cluster genes and the subsequent production of dibenzodioxocinones such as pestalotiollide B, pestalotiollide C, 1',2'-dehydropenicillide, 3'-methoxy-1',2'-dehydropenicillide and 1',2'-epoxy-3',4'-didehydropenicillide. Required for the expression of most PKS genes outside of the dibenzodioxocinones cluster, (43 out of 48 defined PKS genes), and promotes pigmentation of the mycelium and conidia. This Pestalotiopsis microspora protein is Transcription factor dibT.